Consider the following 316-residue polypeptide: Glutathione synthetase (316 aa).

An ATP-grasp domain is found at glutamate 124–glutamate 310. Phenylalanine 150–glycine 207 contributes to the ATP binding site. Residues glutamate 281 and asparagine 283 each contribute to the Mg(2+) site.

The protein belongs to the prokaryotic GSH synthase family. Requires Mg(2+) as cofactor. Mn(2+) is required as a cofactor.

The enzyme catalyses gamma-L-glutamyl-L-cysteine + glycine + ATP = glutathione + ADP + phosphate + H(+). It participates in sulfur metabolism; glutathione biosynthesis; glutathione from L-cysteine and L-glutamate: step 2/2. The polypeptide is Glutathione synthetase (Vibrio parahaemolyticus serotype O3:K6 (strain RIMD 2210633)).